A 232-amino-acid chain; its full sequence is Large ribosomal subunit protein uL1 (232 aa).

Belongs to the universal ribosomal protein uL1 family. Part of the 50S ribosomal subunit.

Binds directly to 23S rRNA. The L1 stalk is quite mobile in the ribosome, and is involved in E site tRNA release. Its function is as follows. Protein L1 is also a translational repressor protein, it controls the translation of the L11 operon by binding to its mRNA. This is Large ribosomal subunit protein uL1 from Variovorax paradoxus (strain S110).